A 993-amino-acid chain; its full sequence is Vinculin (993 aa).

Repeat copies occupy residues 258 to 364 and 373 to 480. The segment at 258 to 480 is 2 X repeats; it reads DSDNVTVMRK…LRNKLRELVD (223 aa). The segment at 730–797 is disordered; it reads ITGAGGSRPP…PPPETDDEEE (68 aa). The span at 758 to 768 shows a compositional bias: basic and acidic residues; that stretch reads VHDRIYIREDI. A compositionally biased stretch (pro residues) spans 769–790; it reads PTPPRPPPPVEISPPPRPPPPP.

It belongs to the vinculin/alpha-catenin family. Exhibits self-association properties.

The protein resides in the cytoplasm. Its subcellular location is the cytoskeleton. The protein localises to the cell junction. It localises to the adherens junction. It is found in the cell membrane. Functionally, involved in cell adhesion. May be involved in the attachment of the actin-based microfilaments to the plasma membrane. This Brugia malayi (Filarial nematode worm) protein is Vinculin.